The primary structure comprises 142 residues: ATP synthase epsilon chain (142 aa).

The protein belongs to the ATPase epsilon chain family. F-type ATPases have 2 components, CF(1) - the catalytic core - and CF(0) - the membrane proton channel. CF(1) has five subunits: alpha(3), beta(3), gamma(1), delta(1), epsilon(1). CF(0) has three main subunits: a, b and c.

The protein localises to the cell inner membrane. Produces ATP from ADP in the presence of a proton gradient across the membrane. The protein is ATP synthase epsilon chain of Shewanella woodyi (strain ATCC 51908 / MS32).